A 37-amino-acid polypeptide reads, in one-letter code: Calcitonin gene-related peptide 1 (37 aa).

A disulfide bridge connects residues Cys-2 and Cys-7. Residue Phe-37 is modified to Phenylalanine amide.

It belongs to the calcitonin family.

It localises to the secreted. Its function is as follows. CGRP1/CALCA is a peptide hormone that induces vasodilation mediated by the CALCRL-RAMP1 receptor complex. Dilates a variety of vessels including the coronary, cerebral and systemic vasculature. Its abundance in the CNS also points toward a neurotransmitter or neuromodulator role. It also elevates platelet cAMP. CGRP1 can also bind and activate CALCR-RAMP1 (AMYR1) receptor complex. This Ovis aries (Sheep) protein is Calcitonin gene-related peptide 1 (CALCA).